The following is a 331-amino-acid chain: D-lactate/D-glycerate dehydrogenase (331 aa).

Residues 154–155 (RI), Asp174, 205–206 (VP), Asn211, 232–234 (FAR), and Asp258 contribute to the NAD(+) site. Arg234 is an active-site residue. Residue Glu263 is part of the active site. His295 serves as the catalytic Proton donor.

It belongs to the D-isomer specific 2-hydroxyacid dehydrogenase family. As to quaternary structure, homodimer.

It carries out the reaction (R)-lactate + NAD(+) = pyruvate + NADH + H(+). It catalyses the reaction (R)-glycerate + NAD(+) = 3-hydroxypyruvate + NADH + H(+). Its function is as follows. Has both D-lactate and D-glycerate dehydrogenase activities. Equally active on pyruvate and hydroxypyruvate. The sequence is that of D-lactate/D-glycerate dehydrogenase from Pediococcus acidilactici.